Here is a 1273-residue protein sequence, read N- to C-terminus: Protein sax-3 (1273 aa).

Residues 1 to 23 (MFNRKTLLCTILLVLQAVIRSFC) form the signal peptide. 5 consecutive Ig-like C2-type domains span residues 31-127 (PVII…GSLK), 133-222 (EDFR…ARLS), 227-312 (PKFE…AHLR), 317-411 (PSFQ…LKVT), and 425-511 (PTIE…ASLT). Intrachain disulfides connect cysteine 52–cysteine 110, cysteine 154–cysteine 205, cysteine 248–cysteine 296, cysteine 338–cysteine 393, and cysteine 446–cysteine 495. Fibronectin type-III domains follow at residues 533-628 (SPTQ…TSKP), 653-750 (QLIK…TAEA), and 755-849 (PPED…MNQD). Residues 874-894 (VPVIVIVAILIIFVVIIIAYC) form a helical membrane-spanning segment. Residues 1033–1273 (APAMPTNPVP…NNGIVTQEQT (241 aa)) are disordered. Residues 1037-1046 (PTNPVPPEPP) are compositionally biased toward pro residues. A compositionally biased stretch (polar residues) spans 1096-1105 (QLHSSDGTGS). Over residues 1106 to 1115 (SKERTGERRT) the composition is skewed to basic and acidic residues. Over residues 1125–1136 (IPPPPSNPPPPG) the composition is skewed to pro residues. Residues 1145-1156 (QTATRRQLNRGS) are compositionally biased toward polar residues. Positions 1207-1222 (MDDDGGSSEADGENSE) are enriched in acidic residues. The span at 1240 to 1273 (SASTLAHSCYGTNGTAQRFRSIPRNNGIVTQEQT) shows a compositional bias: polar residues.

It belongs to the immunoglobulin superfamily. ROBO/SAX3 family. In terms of tissue distribution, expressed in the AVG interneuron and the male-specific sensory neuron HOA.

It localises to the membrane. Its function is as follows. Required to confine migrating sex myoblasts to the ventral muscle quadrants during their migration through the body and for multiple aspects of sensory, motor, and interneuron axon guidance. The chain is Protein sax-3 from Caenorhabditis elegans.